The primary structure comprises 483 residues: Elastin-binding protein EbpS (483 aa).

Basic and acidic residues predominate over residues 1–40 (MSNNFKDDFEKNRQSIDTNSHQDHTEEVEKDQSELEHQDT). Positions 1 to 311 (MSNNFKDDFE…HHDRDKERKK (311 aa)) are disordered. The tract at residues 14–34 (QSIDTNSHQDHTEEVEKDQSE) is elastin-binding. The segment covering 64 to 85 (TNHNKQVHNESQTSEDNVQNEA) has biased composition (polar residues). Composition is skewed to basic and acidic residues over residues 103 to 118 (EPSH…EEYY), 126 to 160 (DKSH…KSEA), and 180 to 199 (SKDK…SKDH). The span at 204-222 (KGAAIGAGTAGVAGAMAAS) shows a compositional bias: low complexity. Polar residues predominate over residues 230–243 (DAQNKSNSGKANNS). Residues 244 to 256 (TEDKASQDKSKEH) show a composition bias toward basic and acidic residues. The segment covering 275-294 (GAASKSASAASKPHASNNAS) has biased composition (low complexity). Residues 296–311 (NHDEHDHHDRDKERKK) are compositionally biased toward basic and acidic residues. The helical transmembrane segment at 317–337 (VLLPLIAAVLIIGALAIFGGM) threads the bilayer. The segment at 348–437 (ENKIANTNKN…QRQGGGQRHT (90 aa)) is disordered. Residues 358–395 (NADESKDKDTSKDASKDKSKSTDSDKSKEDQDKATKDE) show a composition bias toward basic and acidic residues. Residues 400–428 (QNNANQANNQAQNNQNQQQANQNQQQQQQ) show a composition bias toward low complexity. The LysM domain maps to 434-482 (QRHTVNGQENLYRIAIQYYGSGSPENVEKIRRANGLSGNNIRNGQQIVI).

The protein localises to the cell membrane. Promotes binding of soluble elastin peptides and tropoelastin to S.aureus cells although it is not able to promote bacterial adherence to immobilized elastin and, therefore, is not a microbial surface component recognizing adhesive matrix molecule (MSCRAMM). The polypeptide is Elastin-binding protein EbpS (ebpS) (Staphylococcus aureus (strain bovine RF122 / ET3-1)).